The primary structure comprises 273 residues: DNA repair protein RecO (273 aa).

The interval 250–273 is disordered; the sequence is NVGQNPSGKDDLNERRDVDGTGES. A compositionally biased stretch (basic and acidic residues) spans 257–273; it reads GKDDLNERRDVDGTGES.

It belongs to the RecO family.

Functionally, involved in DNA repair and RecF pathway recombination. In Desulfitobacterium hafniense (strain DSM 10664 / DCB-2), this protein is DNA repair protein RecO.